We begin with the raw amino-acid sequence, 104 residues long: Large ribosomal subunit protein uL24 (104 aa).

Belongs to the universal ribosomal protein uL24 family. As to quaternary structure, part of the 50S ribosomal subunit.

Its function is as follows. One of two assembly initiator proteins, it binds directly to the 5'-end of the 23S rRNA, where it nucleates assembly of the 50S subunit. In terms of biological role, one of the proteins that surrounds the polypeptide exit tunnel on the outside of the subunit. This is Large ribosomal subunit protein uL24 from Salmonella paratyphi A (strain ATCC 9150 / SARB42).